A 29-amino-acid polypeptide reads, in one-letter code: Acidic phospholipase A2 Omo-E6 (29 aa).

Ca(2+) contacts are provided by Tyr27 and Gly29.

The cofactor is Ca(2+). As to expression, expressed by the venom gland.

It localises to the secreted. The enzyme catalyses a 1,2-diacyl-sn-glycero-3-phosphocholine + H2O = a 1-acyl-sn-glycero-3-phosphocholine + a fatty acid + H(+). Snake venom phospholipase A2 (PLA2) that inhibits the ADP- and collagen-induced human platelet aggregation. Exhibits strong hydrolytic activities and prefers the anionic micelles (dPPC with deoxycholate) to the zwitterionic micelles (dPPC with Triton X-100). PLA2 catalyzes the calcium-dependent hydrolysis of the 2-acyl groups in 3-sn-phosphoglycerides. This chain is Acidic phospholipase A2 Omo-E6, found in Ovophis monticola (Chinese mountain pitviper).